The primary structure comprises 316 residues: N-acetyl-gamma-glutamyl-phosphate reductase (316 aa).

Cys136 is an active-site residue.

The protein belongs to the NAGSA dehydrogenase family. Type 1 subfamily.

It is found in the cytoplasm. It carries out the reaction N-acetyl-L-glutamate 5-semialdehyde + phosphate + NADP(+) = N-acetyl-L-glutamyl 5-phosphate + NADPH + H(+). Its pathway is amino-acid biosynthesis; L-arginine biosynthesis; N(2)-acetyl-L-ornithine from L-glutamate: step 3/4. Functionally, catalyzes the NADPH-dependent reduction of N-acetyl-5-glutamyl phosphate to yield N-acetyl-L-glutamate 5-semialdehyde. The protein is N-acetyl-gamma-glutamyl-phosphate reductase of Xanthomonas campestris pv. campestris (strain ATCC 33913 / DSM 3586 / NCPPB 528 / LMG 568 / P 25).